A 258-amino-acid chain; its full sequence is Glutamate racemase (258 aa).

Residues 11–12 (DS) and 43–44 (YG) contribute to the substrate site. The active-site Proton donor/acceptor is Cys74. 75-76 (NT) contributes to the substrate binding site. The active-site Proton donor/acceptor is the Cys187. Position 188-189 (188-189 (TH)) interacts with substrate.

It belongs to the aspartate/glutamate racemases family.

It catalyses the reaction L-glutamate = D-glutamate. The protein operates within cell wall biogenesis; peptidoglycan biosynthesis. In terms of biological role, provides the (R)-glutamate required for cell wall biosynthesis. The chain is Glutamate racemase from Bifidobacterium adolescentis (strain ATCC 15703 / DSM 20083 / NCTC 11814 / E194a).